Consider the following 160-residue polypeptide: Iron-sulfur assembly protein IscA1 (160 aa).

This sequence belongs to the HesB/IscA family. Tetramer.

Its subcellular location is the mitochondrion. It functions in the pathway cofactor biosynthesis; iron-sulfur cluster biosynthesis. In terms of biological role, participates in iron-sulfur cluster formation (ISC) pathway for iron-sulfur (Fe-S) cluster biogenesis. Can bind iron and [4Fe-4S] clusters. May function as an iron chaperone. The polypeptide is Iron-sulfur assembly protein IscA1 (Plasmodium falciparum (isolate 3D7)).